Consider the following 210-residue polypeptide: Guanylate kinase (210 aa).

Residues 5–184 (GLLIVFSGPS…AAERVKHIIE (180 aa)) form the Guanylate kinase-like domain. 12–19 (GPSGVGKG) lines the ATP pocket.

This sequence belongs to the guanylate kinase family.

The protein localises to the cytoplasm. The enzyme catalyses GMP + ATP = GDP + ADP. Essential for recycling GMP and indirectly, cGMP. This is Guanylate kinase from Streptococcus mutans serotype c (strain ATCC 700610 / UA159).